The sequence spans 932 residues: Glycine dehydrogenase (decarboxylating) (932 aa).

At lysine 685 the chain carries N6-(pyridoxal phosphate)lysine.

This sequence belongs to the GcvP family. The glycine cleavage system is composed of four proteins: P, T, L and H. Pyridoxal 5'-phosphate is required as a cofactor.

It carries out the reaction N(6)-[(R)-lipoyl]-L-lysyl-[glycine-cleavage complex H protein] + glycine + H(+) = N(6)-[(R)-S(8)-aminomethyldihydrolipoyl]-L-lysyl-[glycine-cleavage complex H protein] + CO2. Functionally, the glycine cleavage system catalyzes the degradation of glycine. The P protein binds the alpha-amino group of glycine through its pyridoxal phosphate cofactor; CO(2) is released and the remaining methylamine moiety is then transferred to the lipoamide cofactor of the H protein. This chain is Glycine dehydrogenase (decarboxylating), found in Brucella suis biovar 1 (strain 1330).